Consider the following 332-residue polypeptide: Spherulin-4 (332 aa).

Positions 1 to 22 (MNIKIVVLVIFAILLGSALAWH) are cleaved as a signal peptide. Residues 26–60 (HHNPTKAPTEAPHRGGGGGGGHNTPAPTQPPRQNT) form a disordered region.

The protein is Spherulin-4 of Physarum polycephalum (Slime mold).